A 213-amino-acid chain; its full sequence is Nicolin-1 (213 aa).

In terms of assembly, part of the neuronal tubulin polyglutamylase complex which contains TPGS1, TPGS2, TTLL1, LRRC49 and NICN1. High expression level is found in brain, testis, liver and kidney. Weak expression in spleen, leukocytes, small intestine and colon.

The protein resides in the nucleus. This Homo sapiens (Human) protein is Nicolin-1 (NICN1).